The following is a 143-amino-acid chain: Holo-[acyl-carrier-protein] synthase (143 aa).

Asp-9 and Glu-63 together coordinate Mg(2+).

The protein belongs to the P-Pant transferase superfamily. AcpS family. Requires Mg(2+) as cofactor.

It localises to the cytoplasm. The enzyme catalyses apo-[ACP] + CoA = holo-[ACP] + adenosine 3',5'-bisphosphate + H(+). In terms of biological role, transfers the 4'-phosphopantetheine moiety from coenzyme A to a Ser of acyl-carrier-protein. This is Holo-[acyl-carrier-protein] synthase from Burkholderia pseudomallei (strain 668).